The chain runs to 204 residues: Putative 3-methyladenine DNA glycosylase (204 aa).

The protein belongs to the DNA glycosylase MPG family.

The polypeptide is Putative 3-methyladenine DNA glycosylase (Bacillus mycoides (strain KBAB4) (Bacillus weihenstephanensis)).